Consider the following 592-residue polypeptide: Elongation factor 1 alpha-like protein (592 aa).

Disordered stretches follow at residues 1–35 (MSRH…EEFR) and 78–159 (SSKA…KQNP). Over residues 12–32 (LDDYELDEEPGEEELTEEQEE) the composition is skewed to acidic residues. Over residues 82-111 (GAKEKQNTDSQKEKKQNKSKEALADAKDPL) the composition is skewed to basic and acidic residues. Residues 113–124 (ESSNGIKNLSLN) are compositionally biased toward polar residues. Basic and acidic residues predominate over residues 137–151 (VKMKNSSESDNQPEK). The 227-residue stretch at 175–401 (KPVVHLVVTG…DQLVPPEKPY (227 aa)) folds into the tr-type G domain. Positions 184-191 (GHVDSGKS) are G1. 184–191 (GHVDSGKS) contributes to the GTP binding site. Residues 240 to 244 (GVTMD) are G2. The interval 261-264 (DAPG) is G3. GTP contacts are provided by residues 323–326 (NKLD) and 352–355 (FKTS). The G4 stretch occupies residues 323 to 326 (NKLD). The segment at 363-365 (SAI) is G5.

Belongs to the TRAFAC class translation factor GTPase superfamily. Classic translation factor GTPase family. In terms of assembly, component of the Dom34-Hbs1 complex, also named Pelota-HBS1L complex, composed of dom34 and hbs1.

The protein localises to the cytoplasm. The catalysed reaction is GTP + H2O = GDP + phosphate + H(+). Its function is as follows. GTPase component of the Dom34-Hbs1 complex, a complex that recognizes stalled ribosomes and triggers the No-Go Decay (NGD) pathway. The Dom34-Hbs1 complex recognizes ribosomes stalled at the 3' end of an mRNA and engages stalled ribosomes by destabilizing mRNA in the mRNA channel. Following ribosome-binding, the Pelota-HBS1L complex promotes the disassembly of stalled ribosomes, followed by degradation of damaged mRNAs as part of the NGD pathway. The protein is Elongation factor 1 alpha-like protein of Schizosaccharomyces pombe (strain 972 / ATCC 24843) (Fission yeast).